Here is a 1031-residue protein sequence, read N- to C-terminus: Beta-galactosidase (1031 aa).

Positions 98 and 197 each coordinate substrate. D197 provides a ligand contact to Na(+). E412, H414, and E457 together coordinate Mg(2+). Substrate contacts are provided by residues E457 and 533-536; that span reads EYAH. E457 functions as the Proton donor in the catalytic mechanism. Catalysis depends on E533, which acts as the Nucleophile. N593 is a Mg(2+) binding site. Residues F597 and D600 each contribute to the Na(+) site. Residues D600 and W1005 each coordinate substrate.

This sequence belongs to the glycosyl hydrolase 2 family. In terms of assembly, homotetramer. It depends on Mg(2+) as a cofactor. The cofactor is Na(+).

The enzyme catalyses Hydrolysis of terminal non-reducing beta-D-galactose residues in beta-D-galactosides.. In Oenococcus oeni (strain ATCC BAA-331 / PSU-1), this protein is Beta-galactosidase.